The primary structure comprises 437 residues: Phenylacetate-coenzyme A ligase (437 aa).

It belongs to the phenylacetyl-CoA ligase family. Monomer.

The enzyme catalyses 2-phenylacetate + ATP + CoA = phenylacetyl-CoA + AMP + diphosphate. Its pathway is aromatic compound metabolism; phenylacetate degradation. Catalyzes the activation of phenylacetic acid (PA) to phenylacetyl-CoA (PA-CoA). The protein is Phenylacetate-coenzyme A ligase (paaK) of Escherichia coli (strain K12).